The primary structure comprises 223 residues: Cytidylate kinase (223 aa).

Gly10 to Ser18 is a binding site for ATP.

This sequence belongs to the cytidylate kinase family. Type 1 subfamily.

It is found in the cytoplasm. It carries out the reaction CMP + ATP = CDP + ADP. It catalyses the reaction dCMP + ATP = dCDP + ADP. This Mycobacterium leprae (strain Br4923) protein is Cytidylate kinase.